A 443-amino-acid polypeptide reads, in one-letter code: Threonine/serine transporter TdcC (443 aa).

Transmembrane regions (helical) follow at residues 22–42 (TTWT…FFPI), 44–64 (AGFG…PIAF), 97–117 (GVVI…IYGV), 140–160 (FVAL…KDLM), 163–183 (VMSY…LSLI), 207–227 (ILVT…FSPI), 259–279 (ASML…FTLS), 319–339 (ASII…LGTL), 366–386 (ISMI…PNIL), 389–409 (IEAM…MYAI), and 423–443 (DNVF…YKLF).

Belongs to the amino acid/polyamine transporter 2 family. SdaC/TdcC subfamily.

The protein resides in the cell inner membrane. It carries out the reaction L-threonine(in) + H(+)(in) = L-threonine(out) + H(+)(out). The enzyme catalyses L-serine(in) + H(+)(in) = L-serine(out) + H(+)(out). In terms of biological role, involved in the import of threonine and serine into the cell, with the concomitant import of a proton (symport system). In Salmonella newport (strain SL254), this protein is Threonine/serine transporter TdcC.